A 293-amino-acid chain; its full sequence is Cytidine deaminase (293 aa).

CMP/dCMP-type deaminase domains are found at residues 47–166 (EDRA…FGPA) and 186–293 (ESED…YQAV). 88 to 90 (NME) serves as a coordination point for substrate. His101 is a binding site for Zn(2+). Glu103 serves as the catalytic Proton donor. Zn(2+) contacts are provided by Cys128 and Cys131.

This sequence belongs to the cytidine and deoxycytidylate deaminase family. Homodimer. It depends on Zn(2+) as a cofactor.

It catalyses the reaction cytidine + H2O + H(+) = uridine + NH4(+). The catalysed reaction is 2'-deoxycytidine + H2O + H(+) = 2'-deoxyuridine + NH4(+). This enzyme scavenges exogenous and endogenous cytidine and 2'-deoxycytidine for UMP synthesis. This Aeromonas salmonicida (strain A449) protein is Cytidine deaminase.